Here is a 543-residue protein sequence, read N- to C-terminus: Malate synthase (543 aa).

Catalysis depends on R162, which acts as the Proton acceptor. Residue D449 is the Proton donor of the active site.

Belongs to the malate synthase family.

It catalyses the reaction glyoxylate + acetyl-CoA + H2O = (S)-malate + CoA + H(+). It participates in carbohydrate metabolism; glyoxylate cycle; (S)-malate from isocitrate: step 2/2. The sequence is that of Malate synthase (masA) from Dictyostelium discoideum (Social amoeba).